The primary structure comprises 109 residues: Cytochrome c-550 (109 aa).

Heme c contacts are provided by Cys13, Cys16, His17, and Met79.

Post-translationally, binds 1 heme c group covalently per subunit.

The protein is Cytochrome c-550 of Nitrobacter winogradskyi (Nitrobacter agilis).